The sequence spans 233 residues: tRNA (guanine-N(7)-)-methyltransferase (233 aa).

Residues E62, E87, D114, and D136 each contribute to the S-adenosyl-L-methionine site. D136 is a catalytic residue. Residues K140, D172, and 211–214 (TRYE) contribute to the substrate site.

This sequence belongs to the class I-like SAM-binding methyltransferase superfamily. TrmB family.

It carries out the reaction guanosine(46) in tRNA + S-adenosyl-L-methionine = N(7)-methylguanosine(46) in tRNA + S-adenosyl-L-homocysteine. It participates in tRNA modification; N(7)-methylguanine-tRNA biosynthesis. Its function is as follows. Catalyzes the formation of N(7)-methylguanine at position 46 (m7G46) in tRNA. This is tRNA (guanine-N(7)-)-methyltransferase from Erythrobacter litoralis (strain HTCC2594).